We begin with the raw amino-acid sequence, 212 residues long: Deoxyribose-phosphate aldolase (212 aa).

Residue Asp89 is the Proton donor/acceptor of the active site. Lys151 (schiff-base intermediate with acetaldehyde) is an active-site residue. Lys180 functions as the Proton donor/acceptor in the catalytic mechanism.

Belongs to the DeoC/FbaB aldolase family. DeoC type 1 subfamily.

The protein resides in the cytoplasm. The enzyme catalyses 2-deoxy-D-ribose 5-phosphate = D-glyceraldehyde 3-phosphate + acetaldehyde. It functions in the pathway carbohydrate degradation; 2-deoxy-D-ribose 1-phosphate degradation; D-glyceraldehyde 3-phosphate and acetaldehyde from 2-deoxy-alpha-D-ribose 1-phosphate: step 2/2. Functionally, catalyzes a reversible aldol reaction between acetaldehyde and D-glyceraldehyde 3-phosphate to generate 2-deoxy-D-ribose 5-phosphate. The sequence is that of Deoxyribose-phosphate aldolase from Clostridium botulinum (strain ATCC 19397 / Type A).